The sequence spans 233 residues: 5'-methylthioadenosine/S-adenosylhomocysteine nucleosidase (233 aa).

Glu12 serves as the catalytic Proton acceptor. Substrate is bound by residues Gly78, Ile156, and 177 to 178 (ME). Residue Asp201 is the Proton donor of the active site.

The protein belongs to the PNP/UDP phosphorylase family. MtnN subfamily.

The enzyme catalyses S-adenosyl-L-homocysteine + H2O = S-(5-deoxy-D-ribos-5-yl)-L-homocysteine + adenine. It catalyses the reaction S-methyl-5'-thioadenosine + H2O = 5-(methylsulfanyl)-D-ribose + adenine. It carries out the reaction 5'-deoxyadenosine + H2O = 5-deoxy-D-ribose + adenine. Its pathway is amino-acid biosynthesis; L-methionine biosynthesis via salvage pathway; S-methyl-5-thio-alpha-D-ribose 1-phosphate from S-methyl-5'-thioadenosine (hydrolase route): step 1/2. Catalyzes the irreversible cleavage of the glycosidic bond in both 5'-methylthioadenosine (MTA) and S-adenosylhomocysteine (SAH/AdoHcy) to adenine and the corresponding thioribose, 5'-methylthioribose and S-ribosylhomocysteine, respectively. Also cleaves 5'-deoxyadenosine, a toxic by-product of radical S-adenosylmethionine (SAM) enzymes, into 5-deoxyribose and adenine. The protein is 5'-methylthioadenosine/S-adenosylhomocysteine nucleosidase of Listeria monocytogenes serovar 1/2a (strain ATCC BAA-679 / EGD-e).